Reading from the N-terminus, the 301-residue chain is ATP synthase gamma chain (301 aa).

The protein belongs to the ATPase gamma chain family. F-type ATPases have 2 components, CF(1) - the catalytic core - and CF(0) - the membrane proton channel. CF(1) has five subunits: alpha(3), beta(3), gamma(1), delta(1), epsilon(1). CF(0) has three main subunits: a, b and c.

It localises to the cell inner membrane. Its function is as follows. Produces ATP from ADP in the presence of a proton gradient across the membrane. The gamma chain is believed to be important in regulating ATPase activity and the flow of protons through the CF(0) complex. The protein is ATP synthase gamma chain of Helicobacter pylori (strain HPAG1).